Here is a 324-residue protein sequence, read N- to C-terminus: Pseudouridylate synthase RPUSD4, mitochondrial (324 aa).

The N-terminal 11 residues, 1-11, are a transit peptide targeting the mitochondrion; that stretch reads MAAAGGGATRG. Aspartate 105 is a catalytic residue.

The protein belongs to the pseudouridine synthase RluA family.

It localises to the mitochondrion matrix. The protein resides in the nucleus. The protein localises to the cytoplasm. The enzyme catalyses uridine in 5S rRNA = pseudouridine in 5S rRNA. It carries out the reaction a uridine in tRNA = a pseudouridine in tRNA. The catalysed reaction is a uridine in mRNA = a pseudouridine in mRNA. Functionally, catalyzes uridine to pseudouridine isomerization (pseudouridylation) of different mitochondrial RNA substrates. Acts on position 1397 in 16S mitochondrial ribosomal RNA (16S mt-rRNA). This modification is required for the assembly of 16S mt-rRNA into a functional mitochondrial ribosome. Acts on position 39 in mitochondrial tRNA(Phe). Also catalyzes pseudouridylation of mRNAs in nucleus: acts as a regulator of pre-mRNA splicing by mediating pseudouridylation of pre-mRNAs at locations associated with alternatively spliced regions. Pseudouridylation of pre-mRNAs near splice sites directly regulates mRNA splicing and mRNA 3'-end processing. In Xenopus tropicalis (Western clawed frog), this protein is Pseudouridylate synthase RPUSD4, mitochondrial.